A 55-amino-acid polypeptide reads, in one-letter code: Variant surface glycoprotein ETAT 1.2 (55 aa).

Asn-34 carries N-linked (GlcNAc...) asparagine glycosylation. A lipid anchor (GPI-anchor amidated asparagine) is attached at Asn-38. Positions 39 to 55 (NSFAIKTSTLLLAVLLF) are cleaved as a propeptide — removed in mature form.

The protein resides in the cell membrane. Its function is as follows. VSG forms a coat on the surface of the parasite. The trypanosome evades the immune response of the host by expressing a series of antigenically distinct VSGs from an estimated 1000 VSG genes. This Trypanosoma brucei rhodesiense protein is Variant surface glycoprotein ETAT 1.2.